Consider the following 330-residue polypeptide: AH receptor-interacting protein (330 aa).

The region spanning glycine 31–cysteine 121 is the PPIase FKBP-type domain. Serine 43 is subject to Phosphoserine. 3 TPR repeats span residues valine 179 to leucine 212, threonine 231 to asparagine 264, and valine 265 to leucine 298.

As to quaternary structure, interacts with RET in the pituitary gland; this interaction prevents the formation of the AIP-survivin complex.

It is found in the cytoplasm. Functionally, may play a positive role in AHR-mediated (aromatic hydrocarbon receptor) signaling, possibly by influencing its receptivity for ligand and/or its nuclear targeting. This is AH receptor-interacting protein (Aip) from Rattus norvegicus (Rat).